A 303-amino-acid polypeptide reads, in one-letter code: Uricase (303 aa).

Ala-2 carries the N-acetylalanine modification. Residues Lys-10 and Lys-23 each carry the N6-acetyllysine; alternate modification. 2 positions are modified to N6-succinyllysine; alternate: Lys-10 and Lys-23. Lys-23 (charge relay system) is an active-site residue. An N6-acetyllysine mark is found at Lys-27 and Lys-36. Phosphoserine is present on residues Ser-39 and Ser-63. The Charge relay system role is filled by Thr-68. 2 residues coordinate urate: Thr-68 and Asp-69. 3 positions are modified to N6-acetyllysine: Lys-118, Lys-122, and Lys-164. Residue Phe-170 coordinates urate. N6-acetyllysine occurs at positions 175 and 185. Residue Arg-187 participates in urate binding. Residues Lys-220 and Lys-227 each carry the N6-acetyllysine; alternate modification. Lys-220 and Lys-227 each carry N6-succinyllysine; alternate. Ser-231 is subject to Phosphoserine. Urate-binding residues include Val-234, Gln-235, and Asn-261. His-263 functions as the Charge relay system in the catalytic mechanism. Lys-277 carries the N6-acetyllysine modification. Tyr-288 carries the post-translational modification Phosphotyrosine. Positions 301–303 (SRL) match the Microbody targeting signal motif.

This sequence belongs to the uricase family. Post-translationally, acetylation of Lys-118, Lys-164 and Lys-290 is observed in liver mitochondria from fasted mice but not from fed mice. May be deacetylated by Sirt5; however it is unclear whether Sirt5 mediates deacetylation or desuccinylation of Uox; additional evidence is required to validate these results.

Its subcellular location is the peroxisome. The protein resides in the mitochondrion. The catalysed reaction is urate + O2 + H2O = 5-hydroxyisourate + H2O2. Its pathway is purine metabolism; urate degradation; (S)-allantoin from urate: step 1/3. Functionally, catalyzes the oxidation of uric acid to 5-hydroxyisourate, which is further processed to form (S)-allantoin. In Mus musculus (Mouse), this protein is Uricase (Uox).